The chain runs to 331 residues: Phosphoribosylformylglycinamidine cyclo-ligase (331 aa).

This sequence belongs to the AIR synthase family.

It is found in the cytoplasm. It catalyses the reaction 2-formamido-N(1)-(5-O-phospho-beta-D-ribosyl)acetamidine + ATP = 5-amino-1-(5-phospho-beta-D-ribosyl)imidazole + ADP + phosphate + H(+). The protein operates within purine metabolism; IMP biosynthesis via de novo pathway; 5-amino-1-(5-phospho-D-ribosyl)imidazole from N(2)-formyl-N(1)-(5-phospho-D-ribosyl)glycinamide: step 2/2. This chain is Phosphoribosylformylglycinamidine cyclo-ligase, found in Clostridium tetani (strain Massachusetts / E88).